The following is a 1029-amino-acid chain: Collagen, type I, alpha 1b (1029 aa).

Residues 1-990 form a disordered region; the sequence is QMSYVDHSKS…KAPDPFRGGH (990 aa). Positions 13–33 are enriched in pro residues; it reads PPQPGPMGPMGPRGPPGPPGS. Low complexity predominate over residues 34–57; that stretch reads SGPQGFTGPPGEPGEPGASGAMGS. The span at 67 to 81 shows a compositional bias: basic and acidic residues; sequence NGDDGEPGKPGRPGE. 3 stretches are compositionally biased toward low complexity: residues 82–91, 120–129, and 136–147; these read RGAAGPQGAR, VPGVMGARGR, and SGARGNDGNTGP. A compositionally biased stretch (gly residues) spans 163–182; sequence PGGAGAKGETGPAGGRGNEG. Low complexity-rich tracts occupy residues 199 to 223, 233 to 267, and 299 to 309; these read AGPAGSPGTDGAPGAKGSPGAAGLA, AQGAVGAPGPKGNNGDPGASGPKGEPGAKGEPGPA, and ERGAPGARGFP. Gly residues predominate over residues 310 to 322; that stretch reads GADGGAGGKGAPG. 2 stretches are compositionally biased toward low complexity: residues 323-351 and 429-465; these read ERGAPGALGAQGATGESGSPGAPGAPGSK and VGAPGPSGVAGPAGEKGEQGPAGPPGFQGLPGPQGAT. The segment covering 466 to 477 has biased composition (gly residues); the sequence is GETGKGLGGPTG. Positions 478–497 are enriched in low complexity; the sequence is PRGAPGPAGNDGAKGEPGAA. Gly residues-rich tracts occupy residues 498-507 and 531-540; these read GAPGGLGAPG and GGKGGDGAPG. 2 stretches are compositionally biased toward low complexity: residues 571 to 580 and 593 to 620; these read VAGPTGPRGA and AGFAGPPGADGQPGAKGETGDSGPKGDA. Gly residues-rich tracts occupy residues 621 to 630 and 645 to 654; these read GAPGPGGPVG and GARGGAGPPG. Low complexity-rich tracts occupy residues 655 to 665, 694 to 722, 731 to 743, 830 to 839, and 855 to 869; these read ATGFPGPAGRV, ETGAAGRPGEAGAAGAPGPSGEKGSPGXD, PQGLAGQRGLPGQ, APGAVGPSGK, and SGPAGVRGPAGPAGA. Over residues 870–884 the composition is skewed to basic and acidic residues; sequence KGDRGEAGEAGDRGG. Residues 906–934 show a composition bias toward low complexity; it reads PAGASGPAGPRGPAGSNGAPGKDGMNGLP. Residues 952-967 show a composition bias toward pro residues; sequence AGPPGPPGPAGPPGPP. The 31-residue stretch at 999 to 1029 folds into the Fibrillar collagen NC1 domain; that stretch reads TQKLPLLDLAPMDVGAPDQEFGVEVGPVCFL.

This sequence belongs to the fibrillar collagen family.

The protein localises to the secreted. The protein resides in the extracellular space. It is found in the extracellular matrix. The chain is Collagen, type I, alpha 1b from Epinephelus aeneus (White grouper).